The chain runs to 166 residues: MASGVTVNDEVIKVFNDMKVRKSSTPEEIKKRKKAVLFCLSDDKKQIIVEEAKQILVGDIGDTVEDPYTAFVKLLPLNDCRYALYDATYETKESKKEDLVFIFWAPESAPLKSKMIYASSKDAIKKKFTGIKHEWQVNGLDDIKDRSTLGEKLGGNVVVSLEGKPL.

Residues 4–153 (GVTVNDEVIK…KDRSTLGEKL (150 aa)) form the ADF-H domain. Serine 24 carries the phosphoserine modification. Positions 30–34 (KKRKK) match the Nuclear localization signal motif.

Belongs to the actin-binding proteins ADF family. Post-translationally, the phosphorylation of Ser-24 may prevent recognition of the nuclear localization signal. Widely distributed in various tissues.

Its subcellular location is the nucleus matrix. It is found in the cytoplasm. The protein localises to the cytoskeleton. Its function is as follows. Controls reversibly actin polymerization and depolymerization in a pH-sensitive manner. It has the ability to bind G- and F-actin in a 1:1 ratio of cofilin to actin. It is the major component of intranuclear and cytoplasmic actin rods. The protein is Cofilin-2 (CFL2) of Gallus gallus (Chicken).